Here is a 316-residue protein sequence, read N- to C-terminus: Pantothenate kinase (316 aa).

95–102 (GSVAVGKS) contributes to the ATP binding site.

Belongs to the prokaryotic pantothenate kinase family.

It is found in the cytoplasm. It catalyses the reaction (R)-pantothenate + ATP = (R)-4'-phosphopantothenate + ADP + H(+). It functions in the pathway cofactor biosynthesis; coenzyme A biosynthesis; CoA from (R)-pantothenate: step 1/5. The sequence is that of Pantothenate kinase from Shigella sonnei (strain Ss046).